The chain runs to 179 residues: MTSQVDDETTNNVNLEIQLTDKAREVLEEVFNLKSNSSLLNNVVEFITKYLTPTKLQQYVDEIRKILDILGKELDTGIELSFEILVSIKNIIEDFYGYLESIKFDLLSKTDRLFVSKHIDLIQQTVIVLAIDKLDESDFISKESLVKILSFVKSINNLTINMKVGRFIPFLKKLICCQC.

This is an uncharacterized protein from Acanthamoeba polyphaga mimivirus (APMV).